The sequence spans 391 residues: Processive diacylglycerol beta-glucosyltransferase (391 aa).

It belongs to the glycosyltransferase 28 family. UgtP subfamily.

It localises to the cell membrane. It catalyses the reaction a 1,2-diacyl-3-O-(beta-D-glucopyranosyl)-sn-glycerol + UDP-alpha-D-glucose = a 1,2-diacyl-3-O-(beta-D-Glc-(1-&gt;6)-beta-D-Glc)-sn-glycerol + UDP + H(+). It carries out the reaction a 1,2-diacyl-sn-glycerol + UDP-alpha-D-glucose = a 1,2-diacyl-3-O-(beta-D-glucopyranosyl)-sn-glycerol + UDP + H(+). Its pathway is glycolipid metabolism; diglucosyl-diacylglycerol biosynthesis. Functionally, processive glucosyltransferase involved in the biosynthesis of both the bilayer- and non-bilayer-forming membrane glucolipids. Is able to successively transfer two glucosyl residues to diacylglycerol (DAG), thereby catalyzing the formation of beta-monoglucosyl-DAG (3-O-(beta-D-glucopyranosyl)-1,2-diacyl-sn-glycerol) and beta-diglucosyl-DAG (3-O-(beta-D-glucopyranosyl-beta-(1-&gt;6)-D-glucopyranosyl)-1,2-diacyl-sn-glycerol). Beta-diglucosyl-DAG is the predominant glycolipid found in Bacillales and is also used as a membrane anchor for lipoteichoic acid (LTA). In Staphylococcus epidermidis (strain ATCC 12228 / FDA PCI 1200), this protein is Processive diacylglycerol beta-glucosyltransferase.